Reading from the N-terminus, the 704-residue chain is Elongation factor G (704 aa).

One can recognise a tr-type G domain in the interval Ala8–Val290. GTP contacts are provided by residues Ala17–Thr24, Asp88–His92, and Asn142–Asp145.

It belongs to the TRAFAC class translation factor GTPase superfamily. Classic translation factor GTPase family. EF-G/EF-2 subfamily.

It is found in the cytoplasm. Catalyzes the GTP-dependent ribosomal translocation step during translation elongation. During this step, the ribosome changes from the pre-translocational (PRE) to the post-translocational (POST) state as the newly formed A-site-bound peptidyl-tRNA and P-site-bound deacylated tRNA move to the P and E sites, respectively. Catalyzes the coordinated movement of the two tRNA molecules, the mRNA and conformational changes in the ribosome. In Salmonella arizonae (strain ATCC BAA-731 / CDC346-86 / RSK2980), this protein is Elongation factor G.